Reading from the N-terminus, the 192-residue chain is NADH-quinone oxidoreductase subunit C (192 aa).

The disordered stretch occupies residues 170–192; that stretch reads LGGIPVEYKGATVPPPDERRQYA.

The protein belongs to the complex I 30 kDa subunit family. NDH-1 is composed of 14 different subunits. Subunits NuoB, C, D, E, F, and G constitute the peripheral sector of the complex.

Its subcellular location is the cell membrane. The catalysed reaction is a quinone + NADH + 5 H(+)(in) = a quinol + NAD(+) + 4 H(+)(out). Functionally, NDH-1 shuttles electrons from NADH, via FMN and iron-sulfur (Fe-S) centers, to quinones in the respiratory chain. The immediate electron acceptor for the enzyme in this species is believed to be a menaquinone. Couples the redox reaction to proton translocation (for every two electrons transferred, four hydrogen ions are translocated across the cytoplasmic membrane), and thus conserves the redox energy in a proton gradient. This is NADH-quinone oxidoreductase subunit C from Acidothermus cellulolyticus (strain ATCC 43068 / DSM 8971 / 11B).